The chain runs to 316 residues: Adenine deaminase (316 aa).

Zn(2+) contacts are provided by histidine 14, histidine 16, and histidine 194. The active-site Proton donor is the glutamate 197. Aspartate 275 is a Zn(2+) binding site. Residue aspartate 276 participates in substrate binding.

It belongs to the metallo-dependent hydrolases superfamily. Adenosine and AMP deaminases family. Adenine deaminase type 2 subfamily. It depends on Zn(2+) as a cofactor.

It catalyses the reaction adenine + H2O + H(+) = hypoxanthine + NH4(+). In terms of biological role, catalyzes the hydrolytic deamination of adenine to hypoxanthine. Plays an important role in the purine salvage pathway and in nitrogen catabolism. This chain is Adenine deaminase, found in Pseudomonas entomophila (strain L48).